Here is a 99-residue protein sequence, read N- to C-terminus: MTLFSSISSMSTSMSGSKSSISSFGSGTSMGSNSIACGGCGGSGGILGSGLGLGLGLGLDLTGGSRSRGACGGNRGNGNGNGGMGGGNGSCCGGPCCGI.

Residues 1–29 form a disordered region; the sequence is MTLFSSISSMSTSMSGSKSSISSFGSGTS.

This sequence belongs to the hssA/B family.

The sequence is that of HssA/B-like protein 42 (hssl42) from Dictyostelium discoideum (Social amoeba).